The chain runs to 656 residues: MRRAVGFPALCLLLNLHAAGCFSRNNDHFLAIRQKKSWKPMFIYDHSQDIKKSLDIAQEAYKHNYPAPSEVQISKRHQIVDSAFPRPAYDPSLNLLAASGQDLEIENLPIPAANVIVVTLQMDIDKLNITLLRIFRQGVAAALGLLPQQVHINRLIEKKSQIELFVSPGNRKPGEPQALQAEEVLRSLNVDVLRQSLPQFGSIDVSPEKNVLQGQHEADKIWSKEGFYAVVIFLSIFIIIVTCLMIIYRLKERLQLSFRQDKEKNQEIHLSPIALQQAQSEAKAAHSMVQPDQAPKVLNVVVDPQGQCTPEIRNTASTSVCPSPFRMKPIGLQERRGSNVSLTLDMSSLGNVEPFVAVSTPREKVAMEYLQSASRVLTSPQLRDVVASSHLLQSEFMEIPMNFVDPKEIDIPRHGTKNRYKTILPNPLSRVCLRPKNITDPLSTYINANYIRGYSGKEKAFIATQGPMINTVNDFWQMVWQEDSPVIVMITKLKEKNEKCVLYWPEKRGIYGKVEVLVIGVNECDNYTIRNLVLKRGSHTQHVKHYWYTSWPDHKTPDSAQPLLQLMLDVEEDRLASEGRGPVVVHCSAGIGRTGCFIATSIGCQQLKEEGVVDALSIVCQLRVDRGGMVQTSEQYEFVHHALCLFESRLSPETVQ.

The N-terminal stretch at 1–23 is a signal peptide; the sequence is MRRAVGFPALCLLLNLHAAGCFS. An O-linked (Xyl...) (chondroitin sulfate) serine glycan is attached at S23. Over 25-225 the chain is Extracellular; that stretch reads NNDHFLAIRQ…HEADKIWSKE (201 aa). N128 is a glycosylation site (N-linked (GlcNAc...) asparagine). Residues 226 to 248 form a helical membrane-spanning segment; that stretch reads GFYAVVIFLSIFIIIVTCLMIIY. The Cytoplasmic segment spans residues 249-656; it reads RLKERLQLSF…ESRLSPETVQ (408 aa). S271 carries the post-translational modification Phosphoserine. S338 bears the Phosphoserine; by PKA mark. One can recognise a Tyrosine-protein phosphatase domain in the interval 392–646; the sequence is LQSEFMEIPM…EFVHHALCLF (255 aa). Residues D553, 587 to 593, and Q631 each bind substrate; that span reads CSAGIGR. The Phosphocysteine intermediate role is filled by C587.

It belongs to the protein-tyrosine phosphatase family. Receptor class 7 subfamily. Interacts with MAPKs. Widely expressed in the brain, most abundant in cerebellum, midbrain, cerebral cortex and hippocampus. Also expressed in heart and skeletal muscle.

It is found in the cytoplasm. Its subcellular location is the cell membrane. It carries out the reaction O-phospho-L-tyrosyl-[protein] + H2O = L-tyrosyl-[protein] + phosphate. In terms of biological role, sequesters mitogen-activated protein kinases (MAPKs) such as MAPK1, MAPK3 and MAPK14 in the cytoplasm in an inactive form. The MAPKs bind to a dephosphorylated kinase interacting motif, phosphorylation of which by the protein kinase A complex releases the MAPKs for activation and translocation into the nucleus. This Rattus norvegicus (Rat) protein is Receptor-type tyrosine-protein phosphatase R (Ptprr).